The chain runs to 946 residues: MSLLNDAALHHFENLNNRIDLNSLKLSQHTELMKVLGLSDFVAESLIKQPALLTDLLDNELLSLADRKEVITTELESAIAKVKDEVTLHRVLRLFRRKHMVVIAWRELLGKAHLVESLDHISYLADQLILQCMSWLYKKQCVEQGIPMNNEGVRQPFFIFAMGKLGGKELNFSSDIDLIFTYPERGETQGERRRIDNQSFFTKLGQRIIGALHQTTVDGFVYRVDMRLRPFGESGPLITNFASIEDYYQSHGRDWERYAMIKARVMGEEGDYKTTLEALLKPFVYRRYIDFSAIESLRKMKAMISSEVRRKGLKDNIKLGKGGIREIEFVAQAFQLIRGGRRAELQCKGLRETLKVLAEIGEVPKERVQSLLDAYHFLRAVENVLQQIGDKQTQTLPDNELDKLRLITVMGYSNWQDFYSKLNQEMDNVHAEFNWVIGDDEEAHDEADQALSELWALHLSQQEATHLLHEKGLDESLAAHFATALSALKEELKKRPIGPRGQATLDKLMPRMIELICVYPDPVELLNRITQLLLKIISRTAYLELLNENDGALKQLLKLCNESTRVASQLARHPILLDELLDPQQLYKPTQLDNYRTELQLFMLRIPEEDMEQQMEALRQFKQIQFLYIAAADIEKSIQLPQVSDHLTYLSEAIMDYVVQIAWLQMVDKFGLPSNVIGSDRKGFAVIGYGKMGGIELGYGSDLDVVFLHDDNIKGETNGRRKIDNQLFYFRLAQRIIHLFSARTNSGILYEIDMRLRPSGDSGILVSSVASYKKYLQNNAWTWEHQALVRARAVFFDKLILAKFNEARETVLSQARNNSALATEIRDMRAKMRKHLSREKEGQFDLKQSPGGMVDIEFFAQYLVLAHACHCGEELCKWSDNLRIFETCRKLGLLTLDEEKKLTGAYCALRDATHRLTLNKKTRIIKGDQFIQERQNVIKIWEKFLD.

Residues 1–441 (MSLLNDAALH…EFNWVIGDDE (441 aa)) are adenylyl removase. The tract at residues 448 to 946 (DQALSELWAL…VIKIWEKFLD (499 aa)) is adenylyl transferase.

This sequence belongs to the GlnE family. The cofactor is Mg(2+).

It catalyses the reaction [glutamine synthetase]-O(4)-(5'-adenylyl)-L-tyrosine + phosphate = [glutamine synthetase]-L-tyrosine + ADP. It carries out the reaction [glutamine synthetase]-L-tyrosine + ATP = [glutamine synthetase]-O(4)-(5'-adenylyl)-L-tyrosine + diphosphate. Involved in the regulation of glutamine synthetase GlnA, a key enzyme in the process to assimilate ammonia. When cellular nitrogen levels are high, the C-terminal adenylyl transferase (AT) inactivates GlnA by covalent transfer of an adenylyl group from ATP to specific tyrosine residue of GlnA, thus reducing its activity. Conversely, when nitrogen levels are low, the N-terminal adenylyl removase (AR) activates GlnA by removing the adenylyl group by phosphorolysis, increasing its activity. The regulatory region of GlnE binds the signal transduction protein PII (GlnB) which indicates the nitrogen status of the cell. This is Bifunctional glutamine synthetase adenylyltransferase/adenylyl-removing enzyme from Psychromonas ingrahamii (strain DSM 17664 / CCUG 51855 / 37).